A 194-amino-acid chain; its full sequence is Outer membrane protein A (194 aa).

An N-terminal signal peptide occupies residues 1–24 (MNKPSKFALALAFAAVTASGVASA). Residues 30–38 (WRNPYGNVW) form a beta stranded membrane-spanning segment. The 117-residue stretch at 77–193 (MAAKVVFNAD…RVEIEIVGSR (117 aa)) folds into the OmpA-like domain.

Belongs to the outer membrane OOP (TC 1.B.6) superfamily.

Its subcellular location is the cell outer membrane. In terms of biological role, structural protein that may protect the integrity of the bacterium. This chain is Outer membrane protein A, found in Bordetella avium.